Here is a 194-residue protein sequence, read N- to C-terminus: Lymphocyte antigen 6 complex locus protein G5b (194 aa).

The first 18 residues, 1 to 18 (MRACVLVHVLTMVGFALG), serve as a signal peptide directing secretion. Residues 26-118 (RTCHLCFLED…SAQHQSTLPG (93 aa)) form the UPAR/Ly6 domain. 5 disulfides stabilise this stretch: C28–C55, C31–C40, C47–C73, C81–C98, and C99–C104. Residue N182 is glycosylated (N-linked (GlcNAc...) asparagine).

N-glycosylated.

It is found in the secreted. The sequence is that of Lymphocyte antigen 6 complex locus protein G5b (Ly6g5b) from Rattus norvegicus (Rat).